Reading from the N-terminus, the 169-residue chain is uncharacterized protein (169 aa).

The protein to M.tuberculosis Rv1480.

This is an uncharacterized protein from Mycobacterium avium.